A 74-amino-acid chain; its full sequence is UPF0435 protein BcerKBAB4_0386 (74 aa).

This sequence belongs to the UPF0435 family.

This chain is UPF0435 protein BcerKBAB4_0386, found in Bacillus mycoides (strain KBAB4) (Bacillus weihenstephanensis).